We begin with the raw amino-acid sequence, 186 residues long: Large ribosomal subunit protein uL10 (186 aa).

In terms of assembly, part of the ribosomal stalk of the 50S ribosomal subunit. The N-terminus interacts with L11 and the large rRNA to form the base of the stalk. The C-terminus forms an elongated spine to which L12 dimers bind in a sequential fashion forming a multimeric L10(L12)X complex.

In terms of biological role, forms part of the ribosomal stalk, playing a central role in the interaction of the ribosome with GTP-bound translation factors. The sequence is that of Large ribosomal subunit protein uL10 from Rhodopseudomonas palustris (strain ATCC BAA-98 / CGA009).